The chain runs to 662 residues: MGRIVGIDLGTTNSVVAVLEAGRPHVIANAEGGRTTPSVVGYSKDQELLVGQLARRQLVLSPRNTFSNLKRFVGRDWEELEDSSLAVPYTVRANDRGQVRVPCPVTEREYAPEELVASIIRKLVDDASTYLGESVEAAVVTVPAYFNDAQRQATRDAGRLAGIAVERILNEPTAAALAYGFDRSAVRRVLVFDLGGGTFDVSLLRIANGVFDVKATNGDTQLGGNDFDQRIVDWIADAFQAEHGVDLRRDRQALQRLTEAAEKAKQELSGVLTTPISLPFIATGENGPLHVETNLDRSTFEGLCPDLLDRLLMPVQSALRDSGWAADDIDDVVLVGGATRMPMVQQLVRTLVPLDPCQSVNPDEVVAIGAAVQAGILTGELRDLLLNDVTPLSLGLETVGGLMRVLIPRNTPIPVRQSDVFSTSEPNQSSVEIHVWQGERQMASDNKSLGRFRLSGIPPAPRGVPQVQVAFDIDANGLLQVSATDRTTGRKQSVSIQGGSNLNEDEVTALLAEAEARADEDRRKRNQIERRNRAQTLVAQAERRLRDAALELGPYGAERQQRAVEMAMRDVQDCLAQDDLQELDLCLSGLEEALFGLNRRLSAERQSDGRPLQGLRNTLGSLKDELFADDWDDDPWAAPSGPPRGRSLNRRDRDPWDDDFYR.

At T198 the chain carries Phosphothreonine; by autocatalysis. The segment at 630–662 is disordered; it reads DWDDDPWAAPSGPPRGRSLNRRDRDPWDDDFYR. Positions 649–662 are enriched in basic and acidic residues; it reads NRRDRDPWDDDFYR.

It belongs to the heat shock protein 70 family.

Its function is as follows. Acts as a chaperone. This chain is Chaperone protein dnaK1 (dnaK1), found in Parasynechococcus marenigrum (strain WH8102).